A 914-amino-acid chain; its full sequence is Polyribonucleotide nucleotidyltransferase (914 aa).

Positions 407 to 427 are disordered; that stretch reads YMHNYEMPPYSTGETGRVGSP. Mg(2+) contacts are provided by D521 and D527. The KH domain occupies 587–646; the sequence is PRIITTSVPVEKIGEVIGPKGKMINQIQEDTGAEIAIEDDGTVFISSEGGEAAKKAKSII. An S1 motif domain is found at 658–730; sequence GETYNGKVVK…DRGKISLAIP (73 aa). Residues 727-914 are disordered; it reads LAIPGFEDQE…VRRDFDPFED (188 aa). Basic and acidic residues-rich tracts occupy residues 742–789, 797–865, and 873–899; these read SRGD…RRSD, DRPR…DRRG, and RGSD…ERTE.

This sequence belongs to the polyribonucleotide nucleotidyltransferase family. The cofactor is Mg(2+).

It localises to the cytoplasm. It catalyses the reaction RNA(n+1) + phosphate = RNA(n) + a ribonucleoside 5'-diphosphate. Its function is as follows. Involved in mRNA degradation. Catalyzes the phosphorolysis of single-stranded polyribonucleotides processively in the 3'- to 5'-direction. The chain is Polyribonucleotide nucleotidyltransferase from Bifidobacterium longum subsp. infantis (strain ATCC 15697 / DSM 20088 / JCM 1222 / NCTC 11817 / S12).